The chain runs to 308 residues: Porphobilinogen deaminase (308 aa).

S-(dipyrrolylmethanemethyl)cysteine is present on Cys241.

It belongs to the HMBS family. As to quaternary structure, monomer. Requires dipyrromethane as cofactor.

The enzyme catalyses 4 porphobilinogen + H2O = hydroxymethylbilane + 4 NH4(+). It functions in the pathway porphyrin-containing compound metabolism; protoporphyrin-IX biosynthesis; coproporphyrinogen-III from 5-aminolevulinate: step 2/4. Tetrapolymerization of the monopyrrole PBG into the hydroxymethylbilane pre-uroporphyrinogen in several discrete steps. The sequence is that of Porphobilinogen deaminase from Staphylococcus carnosus (strain TM300).